A 473-amino-acid polypeptide reads, in one-letter code: MHDNIFLPDAFLAQVQETMPSHLSMDEFVAACKRPLRRSIRVNTLKNSVEEFKKRAEEKQWQLDPVPWCDTGFWITRQESDTVKLGSTAEHMAGLFYIQEASSMMPVTALLKDNDNIEMALDMASAPGSKTTQLAAGMKNKGALVANEYSSSRVKILCSNVQRCGVSNVALTHFDGRVFGGWLPETFDSILLDAPCSGEGTIRKDPDAMHNWSPESVIEIGDTQRDLIKSAFHALKPGGVMVYSTCTLNHEENQNICHHLVTEFGDAVTFEPLGDLFENAEKALTKEGFLHIYPQIFDSEGFFVAKIRKNSATIAPEVKKRLGKFPFALANQKEIKAIEDELHNTLQLSIPETNELWIRDKEVWAFPKRMSSLIGEMRYHRIGFKLAETHKKGYRWQHEAIMAIAKADNPTSSELTIEQAREWYMGRDVRPDNVGKGETIVTFNGAVIGLGKWVGNRIKNGLPRELVRDGNLF.

S-adenosyl-L-methionine-binding positions include 124–130 (ASAPGSK), Glu148, Asp175, and Asp193. Catalysis depends on Cys246, which acts as the Nucleophile.

This sequence belongs to the class I-like SAM-binding methyltransferase superfamily. RsmB/NOP family.

It is found in the cytoplasm. It carries out the reaction cytidine(1407) in 16S rRNA + S-adenosyl-L-methionine = 5-methylcytidine(1407) in 16S rRNA + S-adenosyl-L-homocysteine + H(+). Functionally, specifically methylates the cytosine at position 1407 (m5C1407) of 16S rRNA. The protein is Ribosomal RNA small subunit methyltransferase F of Aliivibrio salmonicida (strain LFI1238) (Vibrio salmonicida (strain LFI1238)).